Consider the following 78-residue polypeptide: Defensin beta 136 (78 aa).

The N-terminal stretch at 1–21 is a signal peptide; it reads MNLCLSALLFFLVILLPSGKG. 3 disulfide bridges follow: Cys-33-Cys-60, Cys-40-Cys-54, and Cys-44-Cys-61.

It belongs to the beta-defensin family.

It localises to the secreted. Functionally, host defense peptide that exhibits antibacterial and antifungal activity. Exhibits antimicrobial activity against E.coli, S.aureus and C.albicans (in vitro). Has high lipopolysaccharide (LPS)-binding affinity, and may thereby be involved in immunoregulation through LPS neutralization. In Homo sapiens (Human), this protein is Defensin beta 136 (DEFB136).